The primary structure comprises 164 residues: 3-isopropylmalate dehydratase small subunit 1 (164 aa).

The protein belongs to the LeuD family. LeuD type 2 subfamily. Heterodimer of LeuC and LeuD.

It carries out the reaction (2R,3S)-3-isopropylmalate = (2S)-2-isopropylmalate. It functions in the pathway amino-acid biosynthesis; L-leucine biosynthesis; L-leucine from 3-methyl-2-oxobutanoate: step 2/4. Functionally, catalyzes the isomerization between 2-isopropylmalate and 3-isopropylmalate, via the formation of 2-isopropylmaleate. The sequence is that of 3-isopropylmalate dehydratase small subunit 1 (leuD1) from Pyrococcus furiosus (strain ATCC 43587 / DSM 3638 / JCM 8422 / Vc1).